The primary structure comprises 426 residues: DNA polymerase processivity factor component OPG148 (426 aa).

Belongs to the orthopoxvirus OPG148 family. As to quaternary structure, interacts with the DNA polymerase catalytic subunit OPG071. Interacts with UDG/OPG116. Component of the uracil-DNA glycosylase(UDG)-OPG148-polymerase complex; OPG148 and UDG form a heterodimeric processivity factor that associates with OPG071 to form the processive polymerase holoenzyme. Interacts with OPG117.

Its function is as follows. Plays an essential role in viral DNA replication by acting as the polymerase processivity factor together with protein OPG116. Serves as a bridge which links the DNA polymerase OPG071 and the uracil DNA glycosylase. The polypeptide is DNA polymerase processivity factor component OPG148 (OPG148) (Cynomys gunnisoni (Gunnison's prairie dog)).